Reading from the N-terminus, the 968-residue chain is Alanine--tRNA ligase, cytoplasmic (968 aa).

ATP-binding positions include arginine 77, histidine 95, tryptophan 176, and 214 to 216; that span reads IWN. Asparagine 216 and aspartate 239 together coordinate L-alanine. Glycine 243 lines the ATP pocket. 4 residues coordinate Zn(2+): histidine 606, histidine 610, cysteine 724, and histidine 728.

It belongs to the class-II aminoacyl-tRNA synthetase family. As to quaternary structure, monomer. Zn(2+) serves as cofactor.

Its subcellular location is the cytoplasm. The enzyme catalyses tRNA(Ala) + L-alanine + ATP = L-alanyl-tRNA(Ala) + AMP + diphosphate. In terms of biological role, catalyzes the attachment of alanine to tRNA(Ala) in a two-step reaction: alanine is first activated by ATP to form Ala-AMP and then transferred to the acceptor end of tRNA(Ala). Also edits incorrectly charged tRNA(Ala) via its editing domain. The chain is Alanine--tRNA ligase, cytoplasmic from Caenorhabditis elegans.